A 172-amino-acid polypeptide reads, in one-letter code: dCTP deaminase, dUMP-forming (172 aa).

DCTP-binding positions include 93 to 98, Asp-111, 119 to 121, Gln-138, and Tyr-151; these read RSSVGR and TLE. Residue Glu-121 is the Proton donor/acceptor of the active site.

This sequence belongs to the dCTP deaminase family. In terms of assembly, homotrimer.

The enzyme catalyses dCTP + 2 H2O = dUMP + NH4(+) + diphosphate. It functions in the pathway pyrimidine metabolism; dUMP biosynthesis; dUMP from dCTP: step 1/1. Functionally, bifunctional enzyme that catalyzes both the deamination of dCTP to dUTP and the hydrolysis of dUTP to dUMP without releasing the toxic dUTP intermediate. This chain is dCTP deaminase, dUMP-forming, found in Hathewaya histolytica (Clostridium histolyticum).